Here is a 21-residue protein sequence, read N- to C-terminus: Agglutinin beta-1 chain (21 aa).

Polar residues predominate over residues 1–10 (NGPNGKSQSI). Residues 1 to 21 (NGPNGKSQSIIVGPWGDRVTN) are disordered.

The protein belongs to the jacalin lectin family. Formed of four alpha chains and four beta chains.

Functionally, D-galactose-specific lectin, binds the T-antigen structure Gal-beta1,3-GalNAc. The sequence is that of Agglutinin beta-1 chain from Maclura pomifera (Osage orange).